The chain runs to 448 residues: UDP-N-acetylmuramoylalanine--D-glutamate ligase (448 aa).

112-118 (GSNAKST) contacts ATP.

This sequence belongs to the MurCDEF family.

The protein resides in the cytoplasm. The catalysed reaction is UDP-N-acetyl-alpha-D-muramoyl-L-alanine + D-glutamate + ATP = UDP-N-acetyl-alpha-D-muramoyl-L-alanyl-D-glutamate + ADP + phosphate + H(+). Its pathway is cell wall biogenesis; peptidoglycan biosynthesis. Its function is as follows. Cell wall formation. Catalyzes the addition of glutamate to the nucleotide precursor UDP-N-acetylmuramoyl-L-alanine (UMA). This Acinetobacter baumannii (strain ACICU) protein is UDP-N-acetylmuramoylalanine--D-glutamate ligase.